A 136-amino-acid polypeptide reads, in one-letter code: Nucleoside diphosphate kinase (136 aa).

ATP contacts are provided by Lys-10, Phe-58, Arg-86, Thr-92, Arg-104, and Asn-114. Residue His-117 is the Pros-phosphohistidine intermediate of the active site.

This sequence belongs to the NDK family. As to quaternary structure, homohexamer. The cofactor is Mg(2+).

The protein resides in the cytoplasm. It carries out the reaction a 2'-deoxyribonucleoside 5'-diphosphate + ATP = a 2'-deoxyribonucleoside 5'-triphosphate + ADP. The catalysed reaction is a ribonucleoside 5'-diphosphate + ATP = a ribonucleoside 5'-triphosphate + ADP. In terms of biological role, major role in the synthesis of nucleoside triphosphates other than ATP. The ATP gamma phosphate is transferred to the NDP beta phosphate via a ping-pong mechanism, using a phosphorylated active-site intermediate. This is Nucleoside diphosphate kinase from Mycobacterium bovis (strain ATCC BAA-935 / AF2122/97).